We begin with the raw amino-acid sequence, 261 residues long: uncharacterized protein (261 aa).

Residues 1–22 form the signal peptide; it reads MIHSKKLTLGICLVLLIILIGG. The N-palmitoyl cysteine moiety is linked to residue Cys-23. A lipid anchor (S-diacylglycerol cysteine) is attached at Cys-23.

It belongs to the staphylococcal tandem lipoprotein family.

The protein resides in the cell membrane. This is an uncharacterized protein from Staphylococcus aureus (strain USA300).